The primary structure comprises 367 residues: Isoflavone 4'-O-methyltransferase (367 aa).

Residues 209-212 (VGGG), Asp233, 233-234 (DQ), 253-254 (DM), and Lys267 contribute to the S-adenosyl-L-methionine site. Catalysis depends on His271, which acts as the Proton acceptor.

This sequence belongs to the class I-like SAM-binding methyltransferase superfamily. Cation-independent O-methyltransferase family. COMT subfamily.

It carries out the reaction a 4'-hydroxyisoflavone + S-adenosyl-L-methionine = a 4'-methoxyisoflavone + S-adenosyl-L-homocysteine + H(+). The enzyme catalyses (2R,3S)-2,4',7-trihydroxyisoflavanone + S-adenosyl-L-methionine = (2R,3S)-2,7-dihydroxy-4'-methoxyisoflavanone + S-adenosyl-L-homocysteine + H(+). Functionally, 2-hydroxyisoflavanone 4'-O-methyltransferase involved in the biosynthesis of formononetin. Can use 2,7,4'-trihydroxyisoflavanone, (+)-6a-hydroxymaackiain or medicarpin as substrate, but not daidzein or (-)-6a-hydroxymaackiain. The polypeptide is Isoflavone 4'-O-methyltransferase (HI4'OMT) (Glycyrrhiza echinata (Licorice)).